The chain runs to 887 residues: Valine--tRNA ligase (887 aa).

Residues 45 to 55 carry the 'HIGH' region motif; that stretch reads PNVTGILHMGH. Positions 528-532 match the 'KMSKS' region motif; sequence KMSKS. Lysine 531 lines the ATP pocket. The stretch at 817-887 forms a coiled coil; the sequence is TGLLNNEAEI…LKESLKSFEE (71 aa).

The protein belongs to the class-I aminoacyl-tRNA synthetase family. ValS type 1 subfamily. Monomer.

It localises to the cytoplasm. The enzyme catalyses tRNA(Val) + L-valine + ATP = L-valyl-tRNA(Val) + AMP + diphosphate. Catalyzes the attachment of valine to tRNA(Val). As ValRS can inadvertently accommodate and process structurally similar amino acids such as threonine, to avoid such errors, it has a 'posttransfer' editing activity that hydrolyzes mischarged Thr-tRNA(Val) in a tRNA-dependent manner. This chain is Valine--tRNA ligase, found in Fusobacterium nucleatum subsp. nucleatum (strain ATCC 25586 / DSM 15643 / BCRC 10681 / CIP 101130 / JCM 8532 / KCTC 2640 / LMG 13131 / VPI 4355).